Reading from the N-terminus, the 156-residue chain is Small ribosomal subunit protein uS7 (156 aa).

This sequence belongs to the universal ribosomal protein uS7 family. Part of the 30S ribosomal subunit. Contacts proteins S9 and S11.

One of the primary rRNA binding proteins, it binds directly to 16S rRNA where it nucleates assembly of the head domain of the 30S subunit. Is located at the subunit interface close to the decoding center, probably blocks exit of the E-site tRNA. This is Small ribosomal subunit protein uS7 from Carboxydothermus hydrogenoformans (strain ATCC BAA-161 / DSM 6008 / Z-2901).